Here is a 219-residue protein sequence, read N- to C-terminus: Large ribosomal subunit protein uL1 (219 aa).

The protein belongs to the universal ribosomal protein uL1 family. Part of the 50S ribosomal subunit.

Functionally, binds directly to 23S rRNA. Probably involved in E site tRNA release. Protein L1 is also a translational repressor protein, it controls the translation of its operon by binding to its mRNA. The polypeptide is Large ribosomal subunit protein uL1 (Pyrococcus abyssi (strain GE5 / Orsay)).